A 440-amino-acid chain; its full sequence is Tol-Pal system protein TolB (440 aa).

The signal sequence occupies residues 1 to 21; it reads MKIFGKWLLVTLLICSMPVKA.

Belongs to the TolB family. In terms of assembly, the Tol-Pal system is composed of five core proteins: the inner membrane proteins TolA, TolQ and TolR, the periplasmic protein TolB and the outer membrane protein Pal. They form a network linking the inner and outer membranes and the peptidoglycan layer.

The protein localises to the periplasm. Part of the Tol-Pal system, which plays a role in outer membrane invagination during cell division and is important for maintaining outer membrane integrity. In Shewanella halifaxensis (strain HAW-EB4), this protein is Tol-Pal system protein TolB.